The sequence spans 493 residues: 3-octaprenyl-4-hydroxybenzoate carboxy-lyase (493 aa).

A Mn(2+)-binding site is contributed by asparagine 172. Prenylated FMN-binding positions include 175–177, 189–191, and 194–195; these read IYR, RWL, and RG. Glutamate 238 serves as a coordination point for Mn(2+). Catalysis depends on aspartate 287, which acts as the Proton donor.

It belongs to the UbiD family. As to quaternary structure, homohexamer. Prenylated FMN is required as a cofactor. Mn(2+) serves as cofactor.

The protein resides in the cell membrane. The catalysed reaction is a 4-hydroxy-3-(all-trans-polyprenyl)benzoate + H(+) = a 2-(all-trans-polyprenyl)phenol + CO2. Its pathway is cofactor biosynthesis; ubiquinone biosynthesis. Its function is as follows. Catalyzes the decarboxylation of 3-octaprenyl-4-hydroxy benzoate to 2-octaprenylphenol, an intermediate step in ubiquinone biosynthesis. The sequence is that of 3-octaprenyl-4-hydroxybenzoate carboxy-lyase from Shewanella sp. (strain MR-4).